The following is a 614-amino-acid chain: DNA ligase (614 aa).

Residues 29–33 (DQDYD) and 73–74 (SI) contribute to the NAD(+) site. Lys111 serves as the catalytic N6-AMP-lysine intermediate. NAD(+)-binding residues include Arg127, Glu158, and Lys270. Residues Cys358, Cys361, Cys374, and Cys380 each coordinate Zn(2+). A BRCT domain is found at 538 to 614 (TLTHELFDKK…MTETDYLSKI (77 aa)).

This sequence belongs to the NAD-dependent DNA ligase family. LigA subfamily. The cofactor is Mg(2+). Mn(2+) is required as a cofactor.

The catalysed reaction is NAD(+) + (deoxyribonucleotide)n-3'-hydroxyl + 5'-phospho-(deoxyribonucleotide)m = (deoxyribonucleotide)n+m + AMP + beta-nicotinamide D-nucleotide.. Its function is as follows. DNA ligase that catalyzes the formation of phosphodiester linkages between 5'-phosphoryl and 3'-hydroxyl groups in double-stranded DNA using NAD as a coenzyme and as the energy source for the reaction. It is essential for DNA replication and repair of damaged DNA. The protein is DNA ligase of Ruthia magnifica subsp. Calyptogena magnifica.